A 70-amino-acid polypeptide reads, in one-letter code: Non-histone chromosomal protein H6 (70 aa).

The tract at residues 1–70 (MPKRKSATKG…AAGDGAGNAK (70 aa)) is disordered. Positions 30 to 45 (AKPKKAAAPKKAVKGK) are enriched in basic residues. Over residues 46–57 (KAAENGDAKAEA) the composition is skewed to basic and acidic residues.

The protein belongs to the HMGN family.

The protein resides in the nucleus. It localises to the secreted. Its function is as follows. Non-histone protein that probably binds to the inner side of nucleosomal DNA, altering the association between the DNA and the nucleosome octamer. In terms of biological role, oncorhyncin III has antibacterial activity against Gram-positive and Gram-negative bacteria at submicromolar concentrations. In Oncorhynchus mykiss (Rainbow trout), this protein is Non-histone chromosomal protein H6.